Consider the following 346-residue polypeptide: c-di-GMP synthase (346 aa).

The protein belongs to the CD-NTase family.

The enzyme catalyses 2 GTP = 3',3'-c-di-GMP + 2 diphosphate. Functionally, cyclic nucleotide synthase (second messenger synthase) of a CBASS antivirus system. CBASS (cyclic oligonucleotide-based antiphage signaling system) provides immunity against bacteriophage. The CD-NTase protein synthesizes cyclic nucleotides in response to infection; these serve as specific second messenger signals. The signals activate a diverse range of effectors, leading to bacterial cell death and thus abortive phage infection. A type I-D(GG) CBASS system. Cyclic dinucleotide synthase that catalyzes the synthesis of c-di-GMP, has no activity with other NTP substrates. This Lachnospiraceae bacterium (strain RUG226) protein is c-di-GMP synthase.